We begin with the raw amino-acid sequence, 172 residues long: Small ribosomal subunit protein uS5 (172 aa).

One can recognise an S5 DRBM domain in the interval 17-80 (FTEKLIKLNR…ERAKRSMVLF (64 aa)).

Belongs to the universal ribosomal protein uS5 family. Part of the 30S ribosomal subunit. Contacts proteins S4 and S8.

With S4 and S12 plays an important role in translational accuracy. Functionally, located at the back of the 30S subunit body where it stabilizes the conformation of the head with respect to the body. The sequence is that of Small ribosomal subunit protein uS5 from Treponema pallidum (strain Nichols).